A 602-amino-acid polypeptide reads, in one-letter code: Elongation factor 4 (602 aa).

Residues 7–189 (RNIRNFSIIA…AIVHRIPPPK (183 aa)) form the tr-type G domain. Residues 19 to 24 (DHGKST) and 136 to 139 (NKID) contribute to the GTP site.

Belongs to the TRAFAC class translation factor GTPase superfamily. Classic translation factor GTPase family. LepA subfamily.

The protein localises to the cell inner membrane. The enzyme catalyses GTP + H2O = GDP + phosphate + H(+). Its function is as follows. Required for accurate and efficient protein synthesis under certain stress conditions. May act as a fidelity factor of the translation reaction, by catalyzing a one-codon backward translocation of tRNAs on improperly translocated ribosomes. Back-translocation proceeds from a post-translocation (POST) complex to a pre-translocation (PRE) complex, thus giving elongation factor G a second chance to translocate the tRNAs correctly. Binds to ribosomes in a GTP-dependent manner. The sequence is that of Elongation factor 4 from Stenotrophomonas maltophilia (strain R551-3).